The following is a 918-amino-acid chain: Isoleucine--tRNA ligase (918 aa).

Positions 59–69 (PYANGHLHIGH) match the 'HIGH' region motif. An L-isoleucyl-5'-AMP-binding site is contributed by E570. Residues 611 to 615 (KMSKS) carry the 'KMSKS' region motif. K614 provides a ligand contact to ATP. 4 residues coordinate Zn(2+): C893, C896, C908, and C911.

Belongs to the class-I aminoacyl-tRNA synthetase family. IleS type 1 subfamily. In terms of assembly, monomer. The cofactor is Zn(2+).

It is found in the cytoplasm. The catalysed reaction is tRNA(Ile) + L-isoleucine + ATP = L-isoleucyl-tRNA(Ile) + AMP + diphosphate. Catalyzes the attachment of isoleucine to tRNA(Ile). As IleRS can inadvertently accommodate and process structurally similar amino acids such as valine, to avoid such errors it has two additional distinct tRNA(Ile)-dependent editing activities. One activity is designated as 'pretransfer' editing and involves the hydrolysis of activated Val-AMP. The other activity is designated 'posttransfer' editing and involves deacylation of mischarged Val-tRNA(Ile). The polypeptide is Isoleucine--tRNA ligase (Campylobacter concisus (strain 13826)).